The primary structure comprises 506 residues: 2-isopropylmalate synthase (506 aa).

A Pyruvate carboxyltransferase domain is found at isoleucine 4–lysine 266. Mn(2+) contacts are provided by aspartate 13, histidine 201, histidine 203, and asparagine 237. The tract at residues asparagine 390–lysine 506 is regulatory domain.

This sequence belongs to the alpha-IPM synthase/homocitrate synthase family. LeuA type 1 subfamily. As to quaternary structure, homodimer. It depends on Mn(2+) as a cofactor.

Its subcellular location is the cytoplasm. The enzyme catalyses 3-methyl-2-oxobutanoate + acetyl-CoA + H2O = (2S)-2-isopropylmalate + CoA + H(+). Its pathway is amino-acid biosynthesis; L-leucine biosynthesis; L-leucine from 3-methyl-2-oxobutanoate: step 1/4. Catalyzes the condensation of the acetyl group of acetyl-CoA with 3-methyl-2-oxobutanoate (2-ketoisovalerate) to form 3-carboxy-3-hydroxy-4-methylpentanoate (2-isopropylmalate). The sequence is that of 2-isopropylmalate synthase from Bacillus thuringiensis (strain Al Hakam).